A 151-amino-acid polypeptide reads, in one-letter code: Large ribosomal subunit protein bL9 (151 aa).

The protein belongs to the bacterial ribosomal protein bL9 family.

In terms of biological role, binds to the 23S rRNA. The chain is Large ribosomal subunit protein bL9 from Lactobacillus delbrueckii subsp. bulgaricus (strain ATCC 11842 / DSM 20081 / BCRC 10696 / JCM 1002 / NBRC 13953 / NCIMB 11778 / NCTC 12712 / WDCM 00102 / Lb 14).